Here is a 189-residue protein sequence, read N- to C-terminus: ATP-dependent protease subunit HslV (189 aa).

Thr-12 is a catalytic residue. Positions 172, 175, and 178 each coordinate Na(+).

It belongs to the peptidase T1B family. HslV subfamily. A double ring-shaped homohexamer of HslV is capped on each side by a ring-shaped HslU homohexamer. The assembly of the HslU/HslV complex is dependent on binding of ATP.

The protein localises to the cytoplasm. It carries out the reaction ATP-dependent cleavage of peptide bonds with broad specificity.. Allosterically activated by HslU binding. Functionally, protease subunit of a proteasome-like degradation complex believed to be a general protein degrading machinery. The polypeptide is ATP-dependent protease subunit HslV (Ehrlichia canis (strain Jake)).